Here is a 127-residue protein sequence, read N- to C-terminus: UPF0212 protein VNG_1264C (127 aa).

This sequence belongs to the UPF0212 family.

In Halobacterium salinarum (strain ATCC 700922 / JCM 11081 / NRC-1) (Halobacterium halobium), this protein is UPF0212 protein VNG_1264C.